We begin with the raw amino-acid sequence, 138 residues long: Photosystem II extrinsic protein U (138 aa).

An N-terminal signal peptide occupies residues 1–28 (MSRVVSALMGLVLMFGCAFFSVQPQAQA). Positions 29-42 (LDLSNGFVSAAVLG) are excised as a propeptide.

It belongs to the PsbU family. PSII is composed of 1 copy each of membrane proteins PsbA, PsbB, PsbC, PsbD, PsbE, PsbF, PsbH, PsbI, PsbJ, PsbK, PsbL, PsbM, PsbT, PsbX, PsbY, PsbZ, Psb30/Ycf12, peripheral proteins PsbO, CyanoQ (PsbQ), PsbU, PsbV and a large number of cofactors. It forms dimeric complexes.

It is found in the cellular thylakoid membrane. One of the extrinsic, lumenal subunits of photosystem II (PSII). PSII is a light-driven water plastoquinone oxidoreductase, using light energy to abstract electrons from H(2)O, generating a proton gradient subsequently used for ATP formation. The extrinsic proteins stabilize the structure of photosystem II oxygen-evolving complex (OEC), the ion environment of oxygen evolution and protect the OEC against heat-induced inactivation. This Picosynechococcus sp. (strain ATCC 27264 / PCC 7002 / PR-6) (Agmenellum quadruplicatum) protein is Photosystem II extrinsic protein U.